We begin with the raw amino-acid sequence, 511 residues long: Bifunctional purine biosynthesis protein PurH (511 aa).

An MGS-like domain is found at Met1 to Val145.

Belongs to the PurH family.

It carries out the reaction (6R)-10-formyltetrahydrofolate + 5-amino-1-(5-phospho-beta-D-ribosyl)imidazole-4-carboxamide = 5-formamido-1-(5-phospho-D-ribosyl)imidazole-4-carboxamide + (6S)-5,6,7,8-tetrahydrofolate. The enzyme catalyses IMP + H2O = 5-formamido-1-(5-phospho-D-ribosyl)imidazole-4-carboxamide. Its pathway is purine metabolism; IMP biosynthesis via de novo pathway; 5-formamido-1-(5-phospho-D-ribosyl)imidazole-4-carboxamide from 5-amino-1-(5-phospho-D-ribosyl)imidazole-4-carboxamide (10-formyl THF route): step 1/1. It functions in the pathway purine metabolism; IMP biosynthesis via de novo pathway; IMP from 5-formamido-1-(5-phospho-D-ribosyl)imidazole-4-carboxamide: step 1/1. In Bacillus cereus (strain 03BB102), this protein is Bifunctional purine biosynthesis protein PurH.